The sequence spans 561 residues: Tudor and KH domain-containing protein (561 aa).

KH domains follow at residues 52-115 (DIEI…KAAI) and 124-190 (PVSE…KHLI). Residues Lys65, Lys76, Lys110, Lys112, Lys152, Lys175, Lys181, Lys187, Lys193, Lys256, and Lys267 each participate in a glycyl lysine isopeptide (Lys-Gly) (interchain with G-Cter in ubiquitin) cross-link. Residues 219–262 (SVRREDMTEPGGAGEPALWKNTSSSMEPTAPLVTPPPKGGGDMA) are disordered. Position 278 is a phosphoserine (Ser278). In terms of domain architecture, Tudor spans 353–412 (TVHVGDIVAAPLPTNGSWYRARVLGTLENGNLDLYFVDFGDNGDCPLKDLRALRSDFLSL). Glycyl lysine isopeptide (Lys-Gly) (interchain with G-Cter in ubiquitin) cross-links involve residues Lys479, Lys510, and Lys529.

This sequence belongs to the Tdrkh family. In terms of assembly, interacts with (symmetrically methylated) PIWIL1, PIWIL2 and PIWIL4. Ubiquitinated by PRKN during mitophagy, leading to its degradation and enhancement of mitophagy. Deubiquitinated by USP30.

It is found in the cytoplasm. The protein resides in the mitochondrion. Participates in the primary piRNA biogenesis pathway and is required during spermatogenesis to repress transposable elements and prevent their mobilization, which is essential for the germline integrity. The piRNA metabolic process mediates the repression of transposable elements during meiosis by forming complexes composed of piRNAs and Piwi proteins and govern the methylation and subsequent repression of transposons. Required for the final steps of primary piRNA biogenesis by participating in the processing of 31-37 nt intermediates into mature piRNAs. May act in pi-bodies and piP-bodies by transferring piRNA precursors or intermediates to or between these granules. The chain is Tudor and KH domain-containing protein (TDRKH) from Homo sapiens (Human).